A 239-amino-acid chain; its full sequence is MVIKAQSPAGFAEEYIIESIWNNRFPPGTILPAERELSELIGVTRTTLREVLQRLARDGWLTIQHGKPTKVNNFWETSGLNILETLARLDHESVPQLIDNLLSVRTNISTIFIRTAFRQHPDKAQEVLAAANEVADHADAFAELDYSIFRGLAFASGNPIYGLIINGMKGLYTRTGRHYFANPEARSLALGFYHKLSELCRQGAHDQVYETVRRYGHESGEIWHRMQKNLPGDLSIQGQ.

The HTH gntR-type domain occupies Gln-6–Phe-74. Positions Glu-34–Gln-53 form a DNA-binding region, H-T-H motif.

In terms of assembly, homodimer.

The protein resides in the cytoplasm. Its function is as follows. Multifunctional regulator of fatty acid metabolism. The protein is Fatty acid metabolism regulator protein of Escherichia fergusonii (strain ATCC 35469 / DSM 13698 / CCUG 18766 / IAM 14443 / JCM 21226 / LMG 7866 / NBRC 102419 / NCTC 12128 / CDC 0568-73).